We begin with the raw amino-acid sequence, 30 residues long: Cycloviolacin-O5 (30 aa).

Positions 1-30 form a cross-link, cyclopeptide (Gly-Asn); it reads GTPCGESCVWIPCISSAVGCSCKNKVCYKN. Intrachain disulfides connect C4–C20, C8–C22, and C13–C27.

This is a cyclic peptide.

Its function is as follows. Probably participates in a plant defense mechanism. The polypeptide is Cycloviolacin-O5 (Viola odorata (Sweet violet)).